The primary structure comprises 225 residues: MIEFLSDIDTQLLLFFNGIHSPFWDYFMSAFTGKVIWVPMYASILYILLKNFHWKVALCYVVAIALTITFADQMCNSFLRPLVGRLRPSNPENPIADLVYIVNGRRGGGFGFPSCHAANSFGLAIFLICLFRKRWLSIFIVLWAFTNSYTRLYLGLHYPGDLVAGAIIGGFGGWLFYFIAHKLTARLQSDTPVPGKGAGMKQTEVMIYTGLLTLAGIIIYSIVQS.

6 helical membrane-spanning segments follow: residues 29 to 49 (SAFT…YILL), 51 to 71 (NFHW…ITFA), 110 to 130 (FGFP…LICL), 136 to 156 (LSIF…YLGL), 160 to 180 (GDLV…YFIA), and 203 to 223 (TEVM…YSIV).

It belongs to the lipid A LpxF 4'-phosphatase family.

It is found in the cell inner membrane. It participates in bacterial outer membrane biogenesis; LPS lipid A biosynthesis. Its function is as follows. Probably removes the 4'-phosphate group from lipid A. Removal of this phosphate group confers resistance to cationic antimicrobial peptides (CAMPs), inflammation-associated peptides produced by the human host. This LPS modification helps maintain the stability of this commensal bacterium in gut microbiota. The chain is Lipid A 4'-phosphatase from Bacteroides thetaiotaomicron (strain ATCC 29148 / DSM 2079 / JCM 5827 / CCUG 10774 / NCTC 10582 / VPI-5482 / E50).